We begin with the raw amino-acid sequence, 134 residues long: Phosphomevalonate dehydratase small subunit (134 aa).

Ser-62 functions as the Proton acceptor in the catalytic mechanism.

The protein belongs to the AcnX type II small subunit family. In terms of assembly, heterodimer composed of a large subunit (PMDh-L) and a small subunit (PMDh-S).

It catalyses the reaction (R)-5-phosphomevalonate = (2E)-3-methyl-5-phosphooxypent-2-enoate + H2O. The protein operates within isoprenoid biosynthesis; isopentenyl diphosphate biosynthesis via mevalonate pathway. Component of a hydro-lyase that catalyzes the dehydration of mevalonate 5-phosphate (MVA5P) to form trans-anhydromevalonate 5-phosphate (tAHMP). Involved in the archaeal mevalonate (MVA) pathway, which provides fundamental precursors for isoprenoid biosynthesis, such as isopentenyl diphosphate (IPP) and dimethylallyl diphosphate (DMAPP). The polypeptide is Phosphomevalonate dehydratase small subunit (Pyrococcus furiosus (strain ATCC 43587 / DSM 3638 / JCM 8422 / Vc1)).